The chain runs to 140 residues: uncharacterized protein (140 aa).

Helical transmembrane passes span 4–21 (ILKF…YLFG) and 26–48 (LVKV…SGYL).

Belongs to the bacteriophage holin family. Cp-1 holin subfamily.

It localises to the cell membrane. This is an uncharacterized protein from Listeria monocytogenes serovar 1/2a (strain ATCC BAA-679 / EGD-e).